A 908-amino-acid polypeptide reads, in one-letter code: Protein translocase subunit SecA (908 aa).

ATP-binding positions include Gln87, Gly105–Thr109, and Asp513. Low complexity predominate over residues Ala852–Glu863. Residues Ala852 to Asp908 are disordered. Positions 892, 894, 903, and 904 each coordinate Zn(2+). The span at Lys898 to Asp908 shows a compositional bias: basic residues.

It belongs to the SecA family. As to quaternary structure, monomer and homodimer. Part of the essential Sec protein translocation apparatus which comprises SecA, SecYEG and auxiliary proteins SecDF-YajC and YidC. It depends on Zn(2+) as a cofactor.

It is found in the cell inner membrane. It localises to the cytoplasm. The catalysed reaction is ATP + H2O + cellular proteinSide 1 = ADP + phosphate + cellular proteinSide 2.. Its function is as follows. Part of the Sec protein translocase complex. Interacts with the SecYEG preprotein conducting channel. Has a central role in coupling the hydrolysis of ATP to the transfer of proteins into and across the cell membrane, serving both as a receptor for the preprotein-SecB complex and as an ATP-driven molecular motor driving the stepwise translocation of polypeptide chains across the membrane. In Vibrio atlanticus (strain LGP32) (Vibrio splendidus (strain Mel32)), this protein is Protein translocase subunit SecA.